Consider the following 491-residue polypeptide: tRNA-2-methylthio-N(6)-dimethylallyladenosine synthase (491 aa).

The 117-residue stretch at 3–119 folds into the MTTase N-terminal domain; the sequence is RSYQIRTYGC…LPTLLERARH (117 aa). [4Fe-4S] cluster-binding residues include Cys-12, Cys-48, Cys-82, Cys-156, Cys-160, and Cys-163. The 231-residue stretch at 142 to 372 folds into the Radical SAM core domain; it reads RESAYSGWVS…IELQNQISWD (231 aa). One can recognise a TRAM domain in the interval 375–446; sequence KELVGRSVEL…PHHLVADSEI (72 aa).

Belongs to the methylthiotransferase family. MiaB subfamily. As to quaternary structure, monomer. Requires [4Fe-4S] cluster as cofactor.

The protein localises to the cytoplasm. The enzyme catalyses N(6)-dimethylallyladenosine(37) in tRNA + (sulfur carrier)-SH + AH2 + 2 S-adenosyl-L-methionine = 2-methylsulfanyl-N(6)-dimethylallyladenosine(37) in tRNA + (sulfur carrier)-H + 5'-deoxyadenosine + L-methionine + A + S-adenosyl-L-homocysteine + 2 H(+). Functionally, catalyzes the methylthiolation of N6-(dimethylallyl)adenosine (i(6)A), leading to the formation of 2-methylthio-N6-(dimethylallyl)adenosine (ms(2)i(6)A) at position 37 in tRNAs that read codons beginning with uridine. The polypeptide is tRNA-2-methylthio-N(6)-dimethylallyladenosine synthase (Saccharopolyspora erythraea (strain ATCC 11635 / DSM 40517 / JCM 4748 / NBRC 13426 / NCIMB 8594 / NRRL 2338)).